A 502-amino-acid polypeptide reads, in one-letter code: Aspartyl/glutamyl-tRNA(Asn/Gln) amidotransferase subunit B (502 aa).

Belongs to the GatB/GatE family. GatB subfamily. Heterotrimer of A, B and C subunits.

It catalyses the reaction L-glutamyl-tRNA(Gln) + L-glutamine + ATP + H2O = L-glutaminyl-tRNA(Gln) + L-glutamate + ADP + phosphate + H(+). It carries out the reaction L-aspartyl-tRNA(Asn) + L-glutamine + ATP + H2O = L-asparaginyl-tRNA(Asn) + L-glutamate + ADP + phosphate + 2 H(+). Its function is as follows. Allows the formation of correctly charged Asn-tRNA(Asn) or Gln-tRNA(Gln) through the transamidation of misacylated Asp-tRNA(Asn) or Glu-tRNA(Gln) in organisms which lack either or both of asparaginyl-tRNA or glutaminyl-tRNA synthetases. The reaction takes place in the presence of glutamine and ATP through an activated phospho-Asp-tRNA(Asn) or phospho-Glu-tRNA(Gln). In Brucella suis (strain ATCC 23445 / NCTC 10510), this protein is Aspartyl/glutamyl-tRNA(Asn/Gln) amidotransferase subunit B.